The sequence spans 477 residues: RNA pseudouridine synthase 4, mitochondrial (477 aa).

Residues 1 to 43 (MAKWRLATATLRRQLQSSSPTISTFKNPTKALSAAAHQSTRSY) constitute a mitochondrion transit peptide. Residues 34–55 (AAAHQSTRSYSTTQTDDSRGKW) are disordered. Over residues 36–48 (AHQSTRSYSTTQT) the composition is skewed to polar residues. The region spanning 90–175 (TTALRWILRC…AKKESFQCSD (86 aa)) is the S4 RNA-binding domain. Asp-236 is a catalytic residue.

Belongs to the pseudouridine synthase RluA family.

It localises to the mitochondrion. It catalyses the reaction a uridine in RNA = a pseudouridine in RNA. In Arabidopsis thaliana (Mouse-ear cress), this protein is RNA pseudouridine synthase 4, mitochondrial.